Here is a 311-residue protein sequence, read N- to C-terminus: Mediator of RNA polymerase II transcription subunit 27 (311 aa).

The residue at position 132 (S132) is a Phosphoserine. K134 carries the post-translational modification N6-methyllysine.

It belongs to the Mediator complex subunit 27 family. As to quaternary structure, component of the Mediator complex, which is composed of MED1, MED4, MED6, MED7, MED8, MED9, MED10, MED11, MED12, MED13, MED13L, MED14, MED15, MED16, MED17, MED18, MED19, MED20, MED21, MED22, MED23, MED24, MED25, MED26, MED27, MED29, MED30, MED31, CCNC, CDK8 and CDC2L6/CDK11. The MED12, MED13, CCNC and CDK8 subunits form a distinct module termed the CDK8 module. Mediator containing the CDK8 module is less active than Mediator lacking this module in supporting transcriptional activation. Individual preparations of the Mediator complex lacking one or more distinct subunits have been variously termed ARC, CRSP, DRIP, PC2, SMCC and TRAP.

It localises to the nucleus. Component of the Mediator complex, a coactivator involved in the regulated transcription of nearly all RNA polymerase II-dependent genes. Mediator functions as a bridge to convey information from gene-specific regulatory proteins to the basal RNA polymerase II transcription machinery. Mediator is recruited to promoters by direct interactions with regulatory proteins and serves as a scaffold for the assembly of a functional preinitiation complex with RNA polymerase II and the general transcription factors. This is Mediator of RNA polymerase II transcription subunit 27 (Med27) from Mus musculus (Mouse).